Consider the following 331-residue polypeptide: Ketol-acid reductoisomerase (NADP(+)) (331 aa).

One can recognise a KARI N-terminal Rossmann domain in the interval 2-182 (ARMYYDSDAN…GGTRAGILET (181 aa)). Residues 25 to 28 (YGSQ), Ser51, Ser53, and 83 to 86 (DEVQ) each bind NADP(+). His108 is a catalytic residue. Gly134 provides a ligand contact to NADP(+). Residues 183–328 (TFREETETDL…KDLRAMFSWL (146 aa)) enclose the KARI C-terminal knotted domain. 4 residues coordinate Mg(2+): Asp191, Glu195, Glu227, and Glu231. Ser252 lines the substrate pocket.

This sequence belongs to the ketol-acid reductoisomerase family. Mg(2+) serves as cofactor.

It carries out the reaction (2R)-2,3-dihydroxy-3-methylbutanoate + NADP(+) = (2S)-2-acetolactate + NADPH + H(+). It catalyses the reaction (2R,3R)-2,3-dihydroxy-3-methylpentanoate + NADP(+) = (S)-2-ethyl-2-hydroxy-3-oxobutanoate + NADPH + H(+). It participates in amino-acid biosynthesis; L-isoleucine biosynthesis; L-isoleucine from 2-oxobutanoate: step 2/4. Its pathway is amino-acid biosynthesis; L-valine biosynthesis; L-valine from pyruvate: step 2/4. Involved in the biosynthesis of branched-chain amino acids (BCAA). Catalyzes an alkyl-migration followed by a ketol-acid reduction of (S)-2-acetolactate (S2AL) to yield (R)-2,3-dihydroxy-isovalerate. In the isomerase reaction, S2AL is rearranged via a Mg-dependent methyl migration to produce 3-hydroxy-3-methyl-2-ketobutyrate (HMKB). In the reductase reaction, this 2-ketoacid undergoes a metal-dependent reduction by NADPH to yield (R)-2,3-dihydroxy-isovalerate. This is Ketol-acid reductoisomerase (NADP(+)) from Trichodesmium erythraeum (strain IMS101).